The following is a 504-amino-acid chain: Anaerobic nitric oxide reductase transcription regulator NorR (504 aa).

4-aspartylphosphate is present on aspartate 57. A Sigma-54 factor interaction domain is found at 187-416 (MIGLSPGMTQ…LEHAIHRAVV (230 aa)). Residues 215 to 222 (GETGTGKE) and 278 to 287 (ADNGTLFLDE) each bind ATP. Residues 479–498 (WAACARMLETDVANLHRLAK) constitute a DNA-binding region (H-T-H motif).

It functions in the pathway nitrogen metabolism; nitric oxide reduction. Functionally, required for the expression of anaerobic nitric oxide (NO) reductase, acts as a transcriptional activator for at least the norVW operon. Activation also requires sigma-54. This chain is Anaerobic nitric oxide reductase transcription regulator NorR, found in Shigella flexneri serotype 5b (strain 8401).